We begin with the raw amino-acid sequence, 505 residues long: 2,3-bisphosphoglycerate-independent phosphoglycerate mutase (505 aa).

Residues Asp11 and Ser61 each coordinate Mn(2+). Ser61 (phosphoserine intermediate) is an active-site residue. Substrate is bound by residues His122, 152–153 (RD), Arg184, Arg190, 258–261 (RPDR), and Lys331. Mn(2+) contacts are provided by Asp396, His400, Asp437, His438, and His455.

This sequence belongs to the BPG-independent phosphoglycerate mutase family. Monomer. Mn(2+) serves as cofactor.

The enzyme catalyses (2R)-2-phosphoglycerate = (2R)-3-phosphoglycerate. The protein operates within carbohydrate degradation; glycolysis; pyruvate from D-glyceraldehyde 3-phosphate: step 3/5. Functionally, catalyzes the interconversion of 2-phosphoglycerate and 3-phosphoglycerate. The protein is 2,3-bisphosphoglycerate-independent phosphoglycerate mutase of Mesomycoplasma hyopneumoniae (strain J / ATCC 25934 / NCTC 10110) (Mycoplasma hyopneumoniae).